A 530-amino-acid chain; its full sequence is Pentatricopeptide repeat-containing protein At5g56310 (530 aa).

PPR repeat units lie at residues 77 to 114 (NTYL…CAKP), 115 to 149 (DTFT…GFDS), 150 to 180 (SVHV…MLVK), 181 to 211 (DVNV…MPCW), 214 to 248 (NEVS…NVEP), 249 to 283 (DEVT…GMNR), 284 to 314 (AVSL…VNER), 315 to 349 (NVVT…GVRP), 350 to 380 (NDVT…MRSK), and 386 to 420 (NIEH…ANAA). The type E motif stretch occupies residues 421-496 (IWGSLLAASN…MAGESSIEVE (76 aa)). The tract at residues 497-527 (NRVYKFISGDLTHPQVERIHEILQEMDLQIQ) is type E(+) motif.

The protein belongs to the PPR family. PCMP-E subfamily.

The chain is Pentatricopeptide repeat-containing protein At5g56310 (PCMP-E13) from Arabidopsis thaliana (Mouse-ear cress).